Reading from the N-terminus, the 600-residue chain is Kelch-like protein 24 (600 aa).

The BTB domain maps to 66–133 (TDVIICVEGK…VYTGKVKITT (68 aa)). The 103-residue stretch at 168–270 (CLGIQRFADT…HPNYFVQTVE (103 aa)) folds into the BACK domain. 6 Kelch repeats span residues 314 to 363 (VIVV…ALRN), 365 to 407 (ILVS…VLLG), 408 to 454 (KVYV…SCIG), 456 to 502 (LFVI…SLNN), 504 to 544 (IYVA…VCNG), and 546 to 592 (IYIL…TIHR).

Forms homodimers. Interacts with GRIK2. Component of the BCR(KLHL24) E3 ubiquitin ligase complex, composed of CUL3, RBX1 and KLHL24. Interacts with CUL3. Interacts with KRT14. In terms of processing, autoubiquitinated. Autoubiquitination leads to proteasomal degradation and is necessary to control KLHL24 levels. Expressed in the brain.

The protein localises to the perikaryon. It localises to the cell projection. It is found in the axon. Its subcellular location is the cytoplasm. The protein resides in the cell junction. The protein localises to the desmosome. It localises to the adherens junction. In terms of biological role, controls KRT14 levels during keratinocytes differentiation. As part of the BCR(KLHL24) E3 ubiquitin ligase complex, mediates ubiquitination of KRT14. Specifically reduces kainate receptor-mediated currents in hippocampal neurons, most probably by modulating channel properties. Has a crucial role in cardiac development and function. The protein is Kelch-like protein 24 (Klhl24) of Mus musculus (Mouse).